Consider the following 800-residue polypeptide: DNA topoisomerase 4 subunit A (800 aa).

Residues 31-495 (LPDVRDGLKP…EIEEIKIDKE (465 aa)) enclose the Topo IIA-type catalytic domain. Catalysis depends on Tyr119, which acts as the O-(5'-phospho-DNA)-tyrosine intermediate.

This sequence belongs to the type II topoisomerase GyrA/ParC subunit family. ParC type 2 subfamily. In terms of assembly, heterotetramer composed of ParC and ParE.

The protein localises to the cell membrane. The enzyme catalyses ATP-dependent breakage, passage and rejoining of double-stranded DNA.. Functionally, topoisomerase IV is essential for chromosome segregation. It relaxes supercoiled DNA. Performs the decatenation events required during the replication of a circular DNA molecule. The polypeptide is DNA topoisomerase 4 subunit A (Staphylococcus aureus (strain MSSA476)).